The chain runs to 41 residues: uncharacterized protein (41 aa).

The disordered stretch occupies residues 19-41 (NSTRNSSSSSRSSYSSRTTVFSL).

This is an uncharacterized protein from Dictyostelium discoideum (Social amoeba).